Reading from the N-terminus, the 115-residue chain is U3-lycotoxin-Ls1h (115 aa).

The N-terminal stretch at 1-20 (MKFVLLFGVFLVTLFSYSSA) is a signal peptide. The propeptide occupies 21 to 44 (EMLDDFDQADEDELLSLIEKEEAR). Cystine bridges form between cysteine 48-cysteine 63, cysteine 55-cysteine 72, cysteine 62-cysteine 87, and cysteine 74-cysteine 85.

This sequence belongs to the neurotoxin 19 (CSTX) family. 01 subfamily. In terms of tissue distribution, expressed by the venom gland.

Its subcellular location is the secreted. The chain is U3-lycotoxin-Ls1h from Lycosa singoriensis (Wolf spider).